The primary structure comprises 119 residues: Large ribosomal subunit protein uL24 (119 aa).

Belongs to the universal ribosomal protein uL24 family. In terms of assembly, part of the 50S ribosomal subunit.

Functionally, one of two assembly initiator proteins, it binds directly to the 5'-end of the 23S rRNA, where it nucleates assembly of the 50S subunit. Its function is as follows. Located at the polypeptide exit tunnel on the outside of the subunit. In Methanococcus maripaludis (strain C5 / ATCC BAA-1333), this protein is Large ribosomal subunit protein uL24.